The primary structure comprises 644 residues: Protein ecdysoneless homolog (644 aa).

Disordered stretches follow at residues 430–449, 496–537, 567–589, and 623–644; these read AVGK…QNYD, LGPR…SLKG, QVEP…TGES, and QSMG…PTKN. Positions 431–447 are enriched in basic and acidic residues; it reads VGKKESESVSKEEKEQN. The transcription activation stretch occupies residues 439–644; sequence VSKEEKEQNY…HRPTSKPTKN (206 aa). The tract at residues 481–497 is involved in nuclear export; it reads ITFDADSFLNYFDKILG. The tract at residues 502–532 is acidic region required for transactivation activity; the sequence is ESDSDDLDDEDFECLDSDDDLDFETHEPGEE. Phosphoserine is present on residues serine 503, serine 505, and serine 518. Acidic residues predominate over residues 503-523; that stretch reads SDSDDLDDEDFECLDSDDDLD. Residues 524-534 show a composition bias toward basic and acidic residues; sequence FETHEPGEEAS. Residues 567–577 show a composition bias toward polar residues; it reads QVEPVSQTTDN.

The protein belongs to the ECD family. In terms of assembly, interacts with TP53, MDM2, TXNIP. Interacts (phosphorylated) with PIH1D1. Interacts with RUVBL1 mediating the PIH1D1-independent association with the R2TP complex. Interacts with RB1, RBL1 and RBL2; ECD competes with E2F1 for binding to hypophospshorylated RB1. Interacts with EP300. Interacts with DDX39A. Phosphorylated predominantly by CK2 on two serine-containing clusters; involved in cell cycle regulation activity. Highly expressed in muscle and heart. Over-expressed in pancreatic and breast cancers.

Its subcellular location is the cytoplasm. The protein resides in the nucleus. In terms of biological role, regulator of p53/TP53 stability and function. Inhibits MDM2-mediated degradation of p53/TP53 possibly by cooperating in part with TXNIP. May be involved transcriptional regulation. In vitro has intrinsic transactivation activity enhanced by EP300. May be a transcriptional activator required for the expression of glycolytic genes. Involved in regulation of cell cycle progression. Proposed to disrupt Rb-E2F binding leading to transcriptional activation of E2F proteins. The cell cycle -regulating function may depend on its RUVBL1-mediated association with the R2TP complex. May play a role in regulation of pre-mRNA splicing. Participates together with DDX39A in mRNA nuclear export. This chain is Protein ecdysoneless homolog (ECD), found in Homo sapiens (Human).